We begin with the raw amino-acid sequence, 146 residues long: Transcriptional regulator MraZ (146 aa).

SpoVT-AbrB domains follow at residues 5–47 (EYYH…TITD) and 76–119 (SIQV…AKEK).

This sequence belongs to the MraZ family. Forms oligomers.

The protein localises to the cytoplasm. Its subcellular location is the nucleoid. The chain is Transcriptional regulator MraZ from Dictyoglomus thermophilum (strain ATCC 35947 / DSM 3960 / H-6-12).